Consider the following 415-residue polypeptide: Thyroxine-binding globulin (415 aa).

Residues 1-20 (MSPFLYLVLLVLGLHATIHC) form the signal peptide. N-linked (GlcNAc...) (complex) asparagine glycosylation occurs at Asn36. Asn99 carries N-linked (GlcNAc...) asparagine glycosylation. An N-linked (GlcNAc...) asparagine; in variant Gary glycan is attached at Ile116. 2 N-linked (GlcNAc...) asparagine glycosylation sites follow: Asn165 and Asn253. 2 residues coordinate thyroxine: Asn293 and Arg398.

The protein belongs to the serpin family. In terms of tissue distribution, expressed by the liver and secreted in plasma.

It localises to the secreted. Functionally, major thyroid hormone transport protein in serum. This chain is Thyroxine-binding globulin (SERPINA7), found in Homo sapiens (Human).